Reading from the N-terminus, the 349-residue chain is Lipoyl synthase (349 aa).

Residues Cys-55, Cys-60, Cys-66, Cys-81, Cys-85, Cys-88, and Ser-292 each contribute to the [4Fe-4S] cluster site. A Radical SAM core domain is found at 67-281 (WESREATFLI…ADFARELGFG (215 aa)).

Belongs to the radical SAM superfamily. Lipoyl synthase family. It depends on [4Fe-4S] cluster as a cofactor.

The protein localises to the cytoplasm. It carries out the reaction [[Fe-S] cluster scaffold protein carrying a second [4Fe-4S](2+) cluster] + N(6)-octanoyl-L-lysyl-[protein] + 2 oxidized [2Fe-2S]-[ferredoxin] + 2 S-adenosyl-L-methionine + 4 H(+) = [[Fe-S] cluster scaffold protein] + N(6)-[(R)-dihydrolipoyl]-L-lysyl-[protein] + 4 Fe(3+) + 2 hydrogen sulfide + 2 5'-deoxyadenosine + 2 L-methionine + 2 reduced [2Fe-2S]-[ferredoxin]. It functions in the pathway protein modification; protein lipoylation via endogenous pathway; protein N(6)-(lipoyl)lysine from octanoyl-[acyl-carrier-protein]: step 2/2. Catalyzes the radical-mediated insertion of two sulfur atoms into the C-6 and C-8 positions of the octanoyl moiety bound to the lipoyl domains of lipoate-dependent enzymes, thereby converting the octanoylated domains into lipoylated derivatives. This Corynebacterium diphtheriae (strain ATCC 700971 / NCTC 13129 / Biotype gravis) protein is Lipoyl synthase.